The chain runs to 544 residues: CTP synthase (544 aa).

An amidoligase domain region spans residues 1–265 (MTKFIFVTGG…DNIITEQLQL (265 aa)). S13 lines the CTP pocket. S13 serves as a coordination point for UTP. ATP contacts are provided by residues 14-19 (SLGKGI) and D71. Mg(2+) is bound by residues D71 and E139. Residues 146 to 148 (DIE), 186 to 191 (KTKPTQ), and K222 each bind CTP. UTP is bound by residues 186 to 191 (KTKPTQ) and K222. In terms of domain architecture, Glutamine amidotransferase type-1 spans 290–544 (KIAMVGKYVD…VKAALNNKKA (255 aa)). An L-glutamine-binding site is contributed by G353. C380 (nucleophile; for glutamine hydrolysis) is an active-site residue. L-glutamine contacts are provided by residues 381–384 (LGMQ), E404, and R471. Active-site residues include H517 and E519.

It belongs to the CTP synthase family. In terms of assembly, homotetramer.

The catalysed reaction is UTP + L-glutamine + ATP + H2O = CTP + L-glutamate + ADP + phosphate + 2 H(+). It carries out the reaction L-glutamine + H2O = L-glutamate + NH4(+). The enzyme catalyses UTP + NH4(+) + ATP = CTP + ADP + phosphate + 2 H(+). Its pathway is pyrimidine metabolism; CTP biosynthesis via de novo pathway; CTP from UDP: step 2/2. Its activity is regulated as follows. Allosterically activated by GTP, when glutamine is the substrate; GTP has no effect on the reaction when ammonia is the substrate. The allosteric effector GTP functions by stabilizing the protein conformation that binds the tetrahedral intermediate(s) formed during glutamine hydrolysis. Inhibited by the product CTP, via allosteric rather than competitive inhibition. In terms of biological role, catalyzes the ATP-dependent amination of UTP to CTP with either L-glutamine or ammonia as the source of nitrogen. Regulates intracellular CTP levels through interactions with the four ribonucleotide triphosphates. The polypeptide is CTP synthase (Neisseria meningitidis serogroup C (strain 053442)).